The sequence spans 371 residues: Neuropeptide S receptor (371 aa).

Residues 1-52 (MPANFTEGSFDSNGTGQMLDSSPVACTETVTFTEVVEGKEWGSFYYSFKTEQ) lie on the Extracellular side of the membrane. Asparagine 4 and asparagine 13 each carry an N-linked (GlcNAc...) asparagine glycan. A helical membrane pass occupies residues 53–73 (LITLWVLFVFTIVGNSVVLFS). The Cytoplasmic portion of the chain corresponds to 74-82 (TWRRKRKSR). The helical transmembrane segment at 83–103 (MTFFVTQLAITDSFTGLVNIL) threads the bilayer. Topologically, residues 104 to 123 (TDIIWRFTGDFMAPDLVCRV) are extracellular. An intrachain disulfide couples cysteine 121 to cysteine 197. The chain crosses the membrane as a helical span at residues 124 to 144 (VRYLQVVLLYASTYVLVSLSI). At 145 to 164 (DRYHAIVYPMKFLQGEKQAK) the chain is on the cytoplasmic side. Residues 165–185 (VLIVIAWSLSFLFSIPTLIIF) form a helical membrane-spanning segment. The Extracellular segment spans residues 186–212 (GKRTLSNGEVQCWALWPDDSYWTPYMT). A helical membrane pass occupies residues 213-233 (IVAFLVYFIPLTIISVMYGIV). Topologically, residues 234–275 (IRTIWIKSKTYETVISNCSDGKLCSSYNRGLISKAKIKAIKY) are cytoplasmic. Residues 276–296 (SIVIILAFICCWSPYFLFDIL) form a helical membrane-spanning segment. The Extracellular segment spans residues 297–312 (DNFNLLPDTQERFYAS). The chain crosses the membrane as a helical span at residues 313-333 (VIIQNLPALNSAINPLIYCVF). Residues 334–371 (SSSISFPCGERRSQDSIMTFRERTERHEMQILSKPEFI) are Cytoplasmic-facing.

This sequence belongs to the G-protein coupled receptor 1 family. Vasopressin/oxytocin receptor subfamily.

The protein resides in the cell membrane. G-protein coupled receptor for neuropeptide S (NPS). Promotes mobilization of intracellular Ca(2+) stores. Inhibits cell growth in response to NPS binding. Involved in pathogenesis of asthma and other IgE-mediated diseases. The sequence is that of Neuropeptide S receptor (NPSR1) from Macaca mulatta (Rhesus macaque).